Reading from the N-terminus, the 297-residue chain is tRNA uridine(34) hydroxylase (297 aa).

Positions 133–228 constitute a Rhodanese domain; the sequence is SGDEVVFFDG…YGETFKDQGL (96 aa). The Cysteine persulfide intermediate role is filled by cysteine 188.

The protein belongs to the TrhO family.

The enzyme catalyses uridine(34) in tRNA + AH2 + O2 = 5-hydroxyuridine(34) in tRNA + A + H2O. Its function is as follows. Catalyzes oxygen-dependent 5-hydroxyuridine (ho5U) modification at position 34 in tRNAs. The protein is tRNA uridine(34) hydroxylase of Pseudarthrobacter chlorophenolicus (strain ATCC 700700 / DSM 12829 / CIP 107037 / JCM 12360 / KCTC 9906 / NCIMB 13794 / A6) (Arthrobacter chlorophenolicus).